A 345-amino-acid chain; its full sequence is Ryncolin-4 (345 aa).

The signal sequence occupies residues 1–19 (MKPWAAFHLIFLVASSLEG). The interval 48–118 (ILQSQPGIPG…DKGDKGEDCN (71 aa)) is disordered. The 58-residue stretch at 57–114 (GIPGVPGTNGSEGLKGDPGPQGPPGIRGPDGIRGEAGPKGDKGDQGDKGDKGDKGDKG) folds into the Collagen-like domain. Over residues 86 to 116 (DGIRGEAGPKGDKGDQGDKGDKGDKGDKGED) the composition is skewed to basic and acidic residues. The region spanning 121 to 339 (DCLPTEVRNC…YADMKIRPQK (219 aa)) is the Fibrinogen C-terminal domain. 2 disulfide bridges follow: Cys130–Cys158 and Cys282–Cys295.

This sequence belongs to the ficolin lectin family. Veficolin subfamily. Hydroxylated, possibly at Pro-80. In terms of tissue distribution, expressed by the venom duct.

It is found in the secreted. Functionally, initiates complement activation and/or interferes in platelet aggregation and/or blood coagulation. This Cerberus rynchops (Dog-faced water snake) protein is Ryncolin-4.